Reading from the N-terminus, the 335-residue chain is MKIGVIGSGSFGTALGSLLADKGYEVTLWCRNDSQIESINRNHINNKHLPDFTLPEKLTASKDLRTVVQGKDMIVSSPPSHALTEILREIKEYLPEKVPIVSASKGIENGTLRLVSEIFESELPGKYHSYLSYLSGPSFAKEIIQKVPTIVSIASRSETTARKVQEIFSFLYFRTYWTPDVIGVEVGGSLKNVIALAAGVSDGLGFGQNTRAALITRGLNEITKIGLKLGADPMTFLGPSGMGDLILTCCGGQSRNRTVGFRLGKGETLEQILSGMNEVAEGIKTTQSAYELSQKLGIEMAITNEVYKMLYEDKNPKEVVKDLMKRDLKREGVLV.

NADPH-binding residues include serine 10, phenylalanine 11, arginine 31, and lysine 105. Residues lysine 105, glycine 136, and serine 138 each coordinate sn-glycerol 3-phosphate. Alanine 140 contributes to the NADPH binding site. Residues lysine 191, aspartate 244, serine 254, arginine 255, and asparagine 256 each coordinate sn-glycerol 3-phosphate. The active-site Proton acceptor is lysine 191. Position 255 (arginine 255) interacts with NADPH. NADPH contacts are provided by valine 279 and glutamate 281.

Belongs to the NAD-dependent glycerol-3-phosphate dehydrogenase family.

The protein resides in the cytoplasm. It carries out the reaction sn-glycerol 3-phosphate + NAD(+) = dihydroxyacetone phosphate + NADH + H(+). The enzyme catalyses sn-glycerol 3-phosphate + NADP(+) = dihydroxyacetone phosphate + NADPH + H(+). It functions in the pathway membrane lipid metabolism; glycerophospholipid metabolism. In terms of biological role, catalyzes the reduction of the glycolytic intermediate dihydroxyacetone phosphate (DHAP) to sn-glycerol 3-phosphate (G3P), the key precursor for phospholipid synthesis. The polypeptide is Glycerol-3-phosphate dehydrogenase [NAD(P)+] (Leptospira borgpetersenii serovar Hardjo-bovis (strain L550)).